The chain runs to 134 residues: Interleukin-5 (134 aa).

The first 21 residues, M1 to A21, serve as a signal peptide directing secretion. Residues N76 and N90 are each glycosylated (N-linked (GlcNAc...) asparagine).

The protein belongs to the IL-5 family. In terms of assembly, homodimer; disulfide-linked. Interacts with IL5RA. Interacts with CSF2RB.

It is found in the secreted. Functionally, homodimeric cytokine expressed predominantly by T-lymphocytes and NK cells that plays an important role in the survival, differentiation, and chemotaxis of eosinophils. Also acts on activated and resting B-cells to induce immunoglobulin production, growth, and differentiation. Mechanistically, exerts its biological effects through a receptor composed of IL5RA subunit and the cytokine receptor common subunit beta/CSF2RB. Binding to the receptor leads to activation of various kinases including LYN, SYK and JAK2 and thereby propagates signals through the RAS-MAPK and JAK-STAT5 pathways respectively. In Canis lupus familiaris (Dog), this protein is Interleukin-5 (IL5).